An 88-amino-acid polypeptide reads, in one-letter code: FXYD domain-containing ion transport regulator 3 (88 aa).

An N-terminal signal peptide occupies residues 1–20 (MQEFALSLLVLLAGLPTLDA). The Extracellular portion of the chain corresponds to 21–38 (NDPEDKDSPFYYDWHSLR). The chain crosses the membrane as a helical span at residues 39–59 (VGGLICAGILCALGIIVLMSG). Over 60–88 (KCKCKFSQKPSHRPGDGPPLITPGSAHNC) the chain is Cytoplasmic. Residues 66–88 (SQKPSHRPGDGPPLITPGSAHNC) form a disordered region.

Belongs to the FXYD family. As to quaternary structure, regulatory subunit of the sodium/potassium-transporting ATPase which is composed of a catalytic alpha subunit, a non-catalytic beta subunit and an additional regulatory subunit. Interacts with catalytic alpha subunit ATP1A1. Also interacts with non-catalytic beta subunit ATP1B1. Interacts with the alpha1-beta1, alpha2-beta1 and alpha3-beta1 NKA isozymes. In terms of processing, glutathionylated.

Its subcellular location is the cell membrane. Functionally, associates with and regulates the activity of the sodium/potassium-transporting ATPase (NKA) which transports Na(+) out of the cell and K(+) into the cell. Reduces glutathionylation of the NKA beta-1 subunit ATP1B1, thus reversing glutathionylation-mediated inhibition of ATP1B1. Induces a hyperpolarization-activated chloride current when expressed in Xenopus oocytes. In Rattus norvegicus (Rat), this protein is FXYD domain-containing ion transport regulator 3 (Fxyd3).